Here is a 192-residue protein sequence, read N- to C-terminus: Probable thymidylate kinase (192 aa).

Residue 7 to 14 (GIDGAGKS) participates in ATP binding.

Belongs to the thymidylate kinase family.

It catalyses the reaction dTMP + ATP = dTDP + ADP. This Methanobrevibacter smithii (strain ATCC 35061 / DSM 861 / OCM 144 / PS) protein is Probable thymidylate kinase.